The chain runs to 396 residues: Acetate kinase (396 aa).

Position 8 (Asn8) interacts with Mg(2+). Residue Lys15 coordinates ATP. Residue Arg89 coordinates substrate. The active-site Proton donor/acceptor is the Asp146. ATP-binding positions include 206–210 (HIGNG), 283–285 (DMR), and 331–335 (GIGEN). Mg(2+) is bound at residue Glu383.

Belongs to the acetokinase family. In terms of assembly, homodimer. Mg(2+) is required as a cofactor. The cofactor is Mn(2+).

The protein resides in the cytoplasm. It carries out the reaction acetate + ATP = acetyl phosphate + ADP. Its pathway is metabolic intermediate biosynthesis; acetyl-CoA biosynthesis; acetyl-CoA from acetate: step 1/2. Its function is as follows. Catalyzes the formation of acetyl phosphate from acetate and ATP. Can also catalyze the reverse reaction. The chain is Acetate kinase from Streptococcus gordonii (strain Challis / ATCC 35105 / BCRC 15272 / CH1 / DL1 / V288).